A 139-amino-acid polypeptide reads, in one-letter code: NADH dehydrogenase [ubiquinone] 1 alpha subcomplex subunit MCI4 (139 aa).

This sequence belongs to the complex I NDUFA5 subunit family.

It is found in the mitochondrion inner membrane. Accessory subunit of the mitochondrial membrane respiratory chain NADH dehydrogenase (Complex I), that is believed not to be involved in catalysis. Complex I functions in the transfer of electrons from NADH to the respiratory chain. The immediate electron acceptor for the enzyme is believed to be ubiquinone. Involved in osmotic and oxidative resistance, yeast to hypha transition and the ability to damage and invade oral epithelial cells. The sequence is that of NADH dehydrogenase [ubiquinone] 1 alpha subcomplex subunit MCI4 from Candida albicans (strain SC5314 / ATCC MYA-2876) (Yeast).